Consider the following 76-residue polypeptide: Acyl carrier protein (76 aa).

The 74-residue stretch at 1–74 (MFDKLKEIIA…DVVEYITEHT (74 aa)) folds into the Carrier domain. O-(pantetheine 4'-phosphoryl)serine is present on Ser34.

It belongs to the acyl carrier protein (ACP) family. 4'-phosphopantetheine is transferred from CoA to a specific serine of apo-ACP by AcpS. This modification is essential for activity because fatty acids are bound in thioester linkage to the sulfhydryl of the prosthetic group.

The protein localises to the cytoplasm. It participates in lipid metabolism; fatty acid biosynthesis. Its function is as follows. Carrier of the growing fatty acid chain in fatty acid biosynthesis. In Clostridium perfringens (strain ATCC 13124 / DSM 756 / JCM 1290 / NCIMB 6125 / NCTC 8237 / Type A), this protein is Acyl carrier protein.